Consider the following 80-residue polypeptide: U-actitoxin-Avd3s (80 aa).

The N-terminal stretch at 1–14 is a signal peptide; sequence FLLCFFLVADVSYG. Residues 19-69 form the BPTI/Kunitz inhibitor domain; that stretch reads CLLPMDVGRCRARHPRYYYNSSSKRCEMFNYGGCRGNANNFITKKECEKVC. 3 disulfide bridges follow: C19/C69, C28/C52, and C44/C65. Residues 74–80 constitute a propeptide that is removed on maturation; that stretch reads RDSPKEN.

This sequence belongs to the venom Kunitz-type family. Sea anemone type 2 potassium channel toxin subfamily.

The protein localises to the secreted. The protein resides in the nematocyst. In terms of biological role, serine protease inhibitor that inhibits both tissue and plasma kallikreins. Has hemolytic activity. Inhibits voltage-gated potassium channels (Kv). This is U-actitoxin-Avd3s from Anemonia viridis (Snakelocks anemone).